The chain runs to 452 residues: Neuromedin-K receptor (452 aa).

Residues 1-71 (MASVPTGENW…TNQFVQPSWR (71 aa)) are Extracellular-facing. N9, N23, N40, and N60 each carry an N-linked (GlcNAc...) asparagine glycan. The helical transmembrane segment at 72-94 (IALWSLAYGLVVAVAVFGNLIVI) threads the bilayer. Residues 95–104 (WIILAHKRMR) are Cytoplasmic-facing. The helical transmembrane segment at 105–126 (TVTNYFLVNLAFSDASVAAFNT) threads the bilayer. Residues 127–146 (LVNFIYGVHSEWYFGANYCR) lie on the Extracellular side of the membrane. C145 and C220 are oxidised to a cystine. The chain crosses the membrane as a helical span at residues 147–168 (FQNFFPITAVFASIYSMTAIAV). The Cytoplasmic segment spans residues 169–188 (DRYMAIIDPLKPRLSATATK). Residues 189-209 (IVIGSIWILAFLLAFPQCLYS) traverse the membrane as a helical segment. At 210–232 (KIKVMPGRTLCYVQWPEGPKQHF) the chain is on the extracellular side. Residues 233 to 257 (TYHIIVIILVYCFPLLIMGVTYTIV) form a helical membrane-spanning segment. The Cytoplasmic portion of the chain corresponds to 258–286 (GITLWGGEIPGDTCDKYHEQLKAKRKVVK). Residues 287-308 (MMIIVVVTFAICWLPYHVYFIL) traverse the membrane as a helical segment. Topologically, residues 309–321 (TAIYQQLNRWKYI) are extracellular. A helical transmembrane segment spans residues 322–346 (QQVYLASFWLAMSSTMYNPIIYCCL). The Cytoplasmic portion of the chain corresponds to 347 to 452 (NKRFRAGFKR…SPYTSVDEYS (106 aa)). C361 carries the S-palmitoyl cysteine lipid modification. The tract at residues 401–452 (DPSEGDPAKSSRKKRAVPRDPSANGCSHREFKSASTTSSFISSPYTSVDEYS) is disordered. The span at 433-452 (SASTTSSFISSPYTSVDEYS) shows a compositional bias: low complexity.

The protein belongs to the G-protein coupled receptor 1 family. The anchoring of this receptor to the plasma membrane is probably mediated by the palmitoylation of a cysteine residue.

It is found in the cell membrane. Its function is as follows. This is a receptor for the tachykinin neuropeptide neuromedin-K (neurokinin B). It is associated with G proteins that activate a phosphatidylinositol-calcium second messenger system. The chain is Neuromedin-K receptor (Tacr3) from Mus musculus (Mouse).